The sequence spans 930 residues: Isoleucine--tRNA ligase (930 aa).

The 'HIGH' region signature appears at proline 57–histidine 67. Glutamate 554 provides a ligand contact to L-isoleucyl-5'-AMP. The short motif at lysine 595–serine 599 is the 'KMSKS' region element. An ATP-binding site is contributed by lysine 598. Zn(2+)-binding residues include cysteine 888, cysteine 891, cysteine 908, and cysteine 911.

Belongs to the class-I aminoacyl-tRNA synthetase family. IleS type 1 subfamily. Monomer. Requires Zn(2+) as cofactor.

It is found in the cytoplasm. It carries out the reaction tRNA(Ile) + L-isoleucine + ATP = L-isoleucyl-tRNA(Ile) + AMP + diphosphate. In terms of biological role, catalyzes the attachment of isoleucine to tRNA(Ile). As IleRS can inadvertently accommodate and process structurally similar amino acids such as valine, to avoid such errors it has two additional distinct tRNA(Ile)-dependent editing activities. One activity is designated as 'pretransfer' editing and involves the hydrolysis of activated Val-AMP. The other activity is designated 'posttransfer' editing and involves deacylation of mischarged Val-tRNA(Ile). This is Isoleucine--tRNA ligase from Streptococcus pneumoniae serotype 4 (strain ATCC BAA-334 / TIGR4).